The primary structure comprises 107 residues: MANEVQDLLSPRKGGHPPAVKAGGMRISKKQEIGTLERHTKKTGFEKTSAIANVAKIQTLDALNDALEKLNYKFPATVHMAHQKPTPALEKVVPLKRIYIIQQPRKC.

The interval 1–23 (MANEVQDLLSPRKGGHPPAVKAG) is disordered.

Expressed in hair follicle (at protein level).

Its function is as follows. May play a role in the early stages of epithelial differentiation or in apoptosis. This Homo sapiens (Human) protein is Death-associated protein-like 1 (DAPL1).